Reading from the N-terminus, the 196-residue chain is uncharacterized protein (196 aa).

FAD contacts are provided by residues 15 to 22, 68 to 71, Tyr-107, and 123 to 126; these read SQGKFNKT, GWWM, and TWNA.

The protein belongs to the oxidoreductase MdaB family. Requires FAD as cofactor.

This is an uncharacterized protein from Schizosaccharomyces pombe (strain 972 / ATCC 24843) (Fission yeast).